The primary structure comprises 466 residues: MTLNLYDTLSRRIVTLDCRDRVELYVCGPTVQSPPHIGHMRSGVVYDCLRRWLEYKGLPVLYVRNITDIDDKILASARSTETGETWWQIAYRVSGLFNEAYKALFVKPPDYEPLVTAHIPDIIKAIEILIQKNVAYRAMDGSGNVFFSIDKHPSYGELTDQKDLLIDDCITPGKRDPRDFTLWKEKKDTDPDLAFWESPWGPGRPGWHIECSVMATKYLGTRFAIHGGGVDLRFPHHENELAQARALGAHFADIWMHTGAVNVEGIKMSKSFGNSVLVQDALSKVSPSALRYYFLTAHYRSTLNYTENSLSQACNTWNKLQGCIYRVYDYLEREGYENDFCVSQLNTDFSTSLDNDLNIPEALAIVHNKVREMNRLVDTQADMQYLGNTLSEVVEMLSILCPIDHKITYTSGAQDNSKALLQVLLEARDRARSKGDFYTSDLLRELLAEADISVSDGHVSYGSPRG.

A Zn(2+)-binding site is contributed by C27. The short motif at 29-39 is the 'HIGH' region element; it reads PTVQSPPHIGH. Residues C211, H236, and E240 each contribute to the Zn(2+) site. Positions 267–271 match the 'KMSKS' region motif; that stretch reads KMSKS. Position 270 (K270) interacts with ATP.

This sequence belongs to the class-I aminoacyl-tRNA synthetase family. Monomer. Zn(2+) is required as a cofactor.

The protein resides in the cytoplasm. It carries out the reaction tRNA(Cys) + L-cysteine + ATP = L-cysteinyl-tRNA(Cys) + AMP + diphosphate. This chain is Cysteine--tRNA ligase 1, found in Tropheryma whipplei (strain TW08/27) (Whipple's bacillus).